A 523-amino-acid chain; its full sequence is Histidine ammonia-lyase (523 aa).

The 5-imidazolinone (Ala-Gly) cross-link spans 148–150; it reads ASG. A 2,3-didehydroalanine (Ser) modification is found at Ser149.

It belongs to the PAL/histidase family. Post-translationally, contains an active site 4-methylidene-imidazol-5-one (MIO), which is formed autocatalytically by cyclization and dehydration of residues Ala-Ser-Gly.

The protein resides in the cytoplasm. The enzyme catalyses L-histidine = trans-urocanate + NH4(+). The protein operates within amino-acid degradation; L-histidine degradation into L-glutamate; N-formimidoyl-L-glutamate from L-histidine: step 1/3. This Chloroflexus aurantiacus (strain ATCC 29366 / DSM 635 / J-10-fl) protein is Histidine ammonia-lyase.